The sequence spans 61 residues: MAKLRITQIRSGIGGTRNQRETLRTLGLRKINASTVRDDRPEVLGMIATVTHLVRVEEVDS.

This sequence belongs to the universal ribosomal protein uL30 family. As to quaternary structure, part of the 50S ribosomal subunit.

This Parafrankia sp. (strain EAN1pec) protein is Large ribosomal subunit protein uL30.